A 415-amino-acid chain; its full sequence is tRNA(Ile)-lysidine synthase (415 aa).

36 to 41 (SGGRDS) lines the ATP pocket.

It belongs to the tRNA(Ile)-lysidine synthase family.

The protein localises to the cytoplasm. The catalysed reaction is cytidine(34) in tRNA(Ile2) + L-lysine + ATP = lysidine(34) in tRNA(Ile2) + AMP + diphosphate + H(+). Ligates lysine onto the cytidine present at position 34 of the AUA codon-specific tRNA(Ile) that contains the anticodon CAU, in an ATP-dependent manner. Cytidine is converted to lysidine, thus changing the amino acid specificity of the tRNA from methionine to isoleucine. In Tropheryma whipplei (strain Twist) (Whipple's bacillus), this protein is tRNA(Ile)-lysidine synthase.